A 372-amino-acid polypeptide reads, in one-letter code: NAD(P)H-quinone oxidoreductase subunit 1 (372 aa).

9 consecutive transmembrane segments (helical) span residues 27–47 (LLWL…GVLV), 65–85 (PEYI…KLIF), 97–117 (WLFT…YIIV), 128–148 (LAMG…GLLM), 176–196 (LALA…VEIV), 204–224 (ILSW…IAAL), 254–274 (FALF…LVSV), 308–328 (VLGI…AILL), and 347–367 (FLLP…LAFP).

The protein belongs to the complex I subunit 1 family. In terms of assembly, NDH-1 is composed of at least 11 different subunits.

The protein localises to the cellular thylakoid membrane. The enzyme catalyses a plastoquinone + NADH + (n+1) H(+)(in) = a plastoquinol + NAD(+) + n H(+)(out). It catalyses the reaction a plastoquinone + NADPH + (n+1) H(+)(in) = a plastoquinol + NADP(+) + n H(+)(out). NDH-1 shuttles electrons from an unknown electron donor, via FMN and iron-sulfur (Fe-S) centers, to quinones in the respiratory and/or the photosynthetic chain. The immediate electron acceptor for the enzyme in this species is believed to be plastoquinone. Couples the redox reaction to proton translocation, and thus conserves the redox energy in a proton gradient. The sequence is that of NAD(P)H-quinone oxidoreductase subunit 1 from Thermosynechococcus vestitus (strain NIES-2133 / IAM M-273 / BP-1).